The sequence spans 204 residues: MGNASVAVGTAVGIPIAVGVIIALIFWCKLQRRYKKEEIRDADLEKMVMEEVAVSVYDGFKAEINSSSEASTINEKEANQDLKPCQEKTAKAGYTPAYRRQLNASMGTLRPKKQSTAYINVPVIFSGEKVNYGMVRDPSYSFMYPLTLSRKETSSLRSASTSNLSSSTENTALHEEIKLDDPYENDFTNYTVNKREFIDSLRPR.

The helical transmembrane segment at Val-6–Phe-26 threads the bilayer.

This sequence belongs to the SKG1 family.

Its subcellular location is the vacuole membrane. Its function is as follows. Involved in cell cycle progression and surviving DNA damage. In Saccharomyces cerevisiae (strain RM11-1a) (Baker's yeast), this protein is Altered inheritance of mitochondria protein 20 (AIM20).